The sequence spans 450 residues: Enolase (450 aa).

Glutamine 173 serves as a coordination point for (2R)-2-phosphoglycerate. The active-site Proton donor is the glutamate 215. Aspartate 254, glutamate 308, and aspartate 335 together coordinate Mg(2+). (2R)-2-phosphoglycerate is bound by residues lysine 360, arginine 389, serine 390, and lysine 411. The active-site Proton acceptor is the lysine 360.

It belongs to the enolase family. Mg(2+) is required as a cofactor.

The protein resides in the cytoplasm. It localises to the secreted. It is found in the cell surface. It carries out the reaction (2R)-2-phosphoglycerate = phosphoenolpyruvate + H2O. It participates in carbohydrate degradation; glycolysis; pyruvate from D-glyceraldehyde 3-phosphate: step 4/5. In terms of biological role, catalyzes the reversible conversion of 2-phosphoglycerate (2-PG) into phosphoenolpyruvate (PEP). It is essential for the degradation of carbohydrates via glycolysis. In Malacoplasma penetrans (strain HF-2) (Mycoplasma penetrans), this protein is Enolase.